The chain runs to 301 residues: MKSEADNLQIVLITGMSGSGKSVALHALEDAGFFCVDNLPPELFLPFVALQKMHQTKRVAIAMDVRTASSLPLVPEQLATLQAQGVMVKSLFLDATTGTLVRRYSETRRKHPLSQAASEHSPLDQRRALVDAIELERELLADLRENAHVIDTSIIRPSKLQGYVKSLISTASEQLTLVFESFAFKRGIPGDADYVFDVRMLPNPHYEPELRQLTGRDLPVADFLKEQADVALMLEHIQKFLNQWLGALARDHRSYVTVAIGCTGGQHRSVYLVEKLAELFGDQWMTLKRHRELEASPLTLE.

15-22 (GMSGSGKS) provides a ligand contact to ATP. Residue 64–67 (DVRT) coordinates GTP.

The protein belongs to the RapZ-like family.

In terms of biological role, displays ATPase and GTPase activities. The sequence is that of Nucleotide-binding protein Rfer_1653 from Albidiferax ferrireducens (strain ATCC BAA-621 / DSM 15236 / T118) (Rhodoferax ferrireducens).